Reading from the N-terminus, the 746-residue chain is Double-stranded RNA-specific editase B2 (746 aa).

Disordered regions lie at residues 1 to 36 (MASVLGSGRGSGGLSSQLKCKSKRRRRRRSKRKDKV) and 50 to 105 (SPGT…PLEE). Residues 20–34 (CKSKRRRRRRSKRKD) are compositionally biased toward basic residues. Residues 23-35 (KRRRRRRSKRKDK) form an R-domain (ssRNA-binding) region. DRBM domains are found at residues 126–192 (TPKN…SFVQ) and 284–348 (NPVV…ALFD). An A to I editase domain is found at 415–742 (VLSSGTKCIS…VRKPPEQDQF (328 aa)). A Zn(2+)-binding site is contributed by H439. E441 functions as the Proton donor in the catalytic mechanism. Zn(2+) contacts are provided by C497 and C562.

As to expression, brain specific.

The protein resides in the nucleus. Lacks editing activity. It prevents the binding of other ADAR enzymes to targets in vitro, and decreases the efficiency of these enzymes. Capable of binding to dsRNA but also to ssRNA. This is Double-stranded RNA-specific editase B2 (Adarb2) from Rattus norvegicus (Rat).